The following is a 207-amino-acid chain: Uracil phosphoribosyltransferase (207 aa).

Residues Arg77, Arg102, and 129–137 each bind 5-phospho-alpha-D-ribose 1-diphosphate; that span reads DPMLATGGS. Uracil contacts are provided by residues Ile192 and 197–199; that span reads GDA. Residue Asp198 coordinates 5-phospho-alpha-D-ribose 1-diphosphate.

The protein belongs to the UPRTase family. The cofactor is Mg(2+).

The enzyme catalyses UMP + diphosphate = 5-phospho-alpha-D-ribose 1-diphosphate + uracil. The protein operates within pyrimidine metabolism; UMP biosynthesis via salvage pathway; UMP from uracil: step 1/1. With respect to regulation, allosterically activated by GTP. Catalyzes the conversion of uracil and 5-phospho-alpha-D-ribose 1-diphosphate (PRPP) to UMP and diphosphate. In Mycoplasma mobile (strain ATCC 43663 / 163K / NCTC 11711) (Mesomycoplasma mobile), this protein is Uracil phosphoribosyltransferase.